The following is a 518-amino-acid chain: MIPDVSQALAWLTEHPEALKGIRRGLERETLRVTPEGELATTGHPESLGAALTHKWITTDFAEALLEFITPVDGDIDHMLTVMRDIHRHTARALGDERMWPLSMPCYIKEGQDIELAQYGTSNIGRFKTLYRSGLKNRYGALMQTISGVHYNFSLPLAFWQAKCQVDDAESGKEAISAGYFRLIRNYYRFGWVIPYLFGASPAICSSFLQGKPTKLPFEKTDCGMYYLPYATSLRLSDLGYTNKSQSNLGITFNDLHGYVAGLKRAIKTPSEEYAKLGLKKDGEYLQINTNILQIENELYAPIRPKRVTRDGESPSDALLRGGIEYIEVRSLDINPFSPIGVDENQVRFLDLFMVWCALADAPEMSSDELLCTRTNWNRVILEGRKPGLTLGIGCETAQFPLEKVGKDLFRDLRRVAQTLDGIHGGQEYQQVCDRLVACFDDPELTYSAQILRSMIENGIGGTGRMLADRYRTMLREEPLQALHEEDFRQEQAASLARQREIEAADTEPFDEWLAKQA.

It belongs to the glutamate--cysteine ligase type 1 family. Type 1 subfamily.

The catalysed reaction is L-cysteine + L-glutamate + ATP = gamma-L-glutamyl-L-cysteine + ADP + phosphate + H(+). The protein operates within sulfur metabolism; glutathione biosynthesis; glutathione from L-cysteine and L-glutamate: step 1/2. The chain is Glutamate--cysteine ligase from Cronobacter sakazakii (strain ATCC BAA-894) (Enterobacter sakazakii).